Consider the following 311-residue polypeptide: GTPase Era (311 aa).

Positions 18 to 185 (RSGFVALIGA…AKYLAESVPN (168 aa)) constitute an Era-type G domain. Residues 26–33 (GAPNAGKS) are G1. 26–33 (GAPNAGKS) is a GTP binding site. The tract at residues 52-56 (QTTRA) is G2. Positions 73-76 (DTPG) are G3. GTP contacts are provided by residues 73–77 (DTPGI) and 135–138 (NKVD). The interval 135-138 (NKVD) is G4. The segment at 164–166 (ISA) is G5. The KH type-2 domain occupies 216 to 293 (LHEELPYAST…HLFLFVKVRE (78 aa)).

The protein belongs to the TRAFAC class TrmE-Era-EngA-EngB-Septin-like GTPase superfamily. Era GTPase family. As to quaternary structure, monomer.

The protein resides in the cytoplasm. Its subcellular location is the cell inner membrane. Functionally, an essential GTPase that binds both GDP and GTP, with rapid nucleotide exchange. Plays a role in 16S rRNA processing and 30S ribosomal subunit biogenesis and possibly also in cell cycle regulation and energy metabolism. The sequence is that of GTPase Era from Brucella suis biovar 1 (strain 1330).